The primary structure comprises 401 residues: NAD(P)H-quinone oxidoreductase subunit H, chloroplastic (401 aa).

It belongs to the complex I 49 kDa subunit family. In terms of assembly, NDH is composed of at least 16 different subunits, 5 of which are encoded in the nucleus.

It localises to the plastid. It is found in the chloroplast thylakoid membrane. It catalyses the reaction a plastoquinone + NADH + (n+1) H(+)(in) = a plastoquinol + NAD(+) + n H(+)(out). It carries out the reaction a plastoquinone + NADPH + (n+1) H(+)(in) = a plastoquinol + NADP(+) + n H(+)(out). Functionally, NDH shuttles electrons from NAD(P)H:plastoquinone, via FMN and iron-sulfur (Fe-S) centers, to quinones in the photosynthetic chain and possibly in a chloroplast respiratory chain. The immediate electron acceptor for the enzyme in this species is believed to be plastoquinone. Couples the redox reaction to proton translocation, and thus conserves the redox energy in a proton gradient. In Aethionema cordifolium (Lebanon stonecress), this protein is NAD(P)H-quinone oxidoreductase subunit H, chloroplastic.